A 541-amino-acid chain; its full sequence is Protein wntless homolog (541 aa).

Over 1 to 15 the chain is Cytoplasmic; sequence MAGAIIENMSTKKLC. The chain crosses the membrane as a helical span at residues 16–36; that stretch reads IVGGILLVFQIVAFLVGGLIA. The Lumenal segment spans residues 37 to 232; that stretch reads PAPTTAVPYT…GIHQNGGFTK (196 aa). The interaction with Wnt proteins stretch occupies residues 101–232; the sequence is MEMSPWFQFM…GIHQNGGFTK (132 aa). A helical membrane pass occupies residues 233-253; it reads VWFAMKTFLTPSIFIIMVWYW. Over 254-268 the chain is Cytoplasmic; that stretch reads RRITMMSRPPVLLEK. A helical membrane pass occupies residues 269 to 289; the sequence is VIFALGISMTFINIPVEWFSI. Over 290–303 the chain is Lumenal; that stretch reads GFDWTWMLLFGDIR. Residues 304–324 form a helical membrane-spanning segment; sequence QGIFYAMLLSFWIIFCGEHMM. The Cytoplasmic segment spans residues 325 to 331; the sequence is DQHERNH. Residues 332–352 form a helical membrane-spanning segment; it reads IAGYWKQVGPIAVGSFCLFIF. The Lumenal segment spans residues 353–380; sequence DMCERGVQLTNPFYSIWTTDVGTELAMA. Residues 381–401 form a helical membrane-spanning segment; that stretch reads FIIVAGICLCLYFLFLCFMVF. Over 402–431 the chain is Cytoplasmic; it reads QVFRNISGKQSSLPAMSKVRRLHYEGLIFR. Residues 432-452 form a helical membrane-spanning segment; that stretch reads FKFLMLITLACAAMTVIFFIV. The Lumenal portion of the chain corresponds to 453–471; it reads SQVSEGHWKWGGVTVQVSS. Residues 472 to 492 traverse the membrane as a helical segment; that stretch reads AFFTGIYGMWNLYVFALMFLY. The Cytoplasmic segment spans residues 493–541; sequence APSHKNYGEDQSNGDLGVHSGEELQLTTTITHVDGPTEIYKLTRKEAQE.

Belongs to the wntless family. In terms of assembly, interacts with WNT3A. Interacts with WNT1, WNT3 and WNT5. N-glycosylated. As to expression, expressed in the brain, skeletal muscle, heart muscle, lung, gut, liver, and kidney (at protein level). In the brain, expressed in the cortex, striatum, hippocampus and to a lesser extent in the cerebellum (at protein level). Expressed in kidney, lung, skin, intestine, brain, spinal cord, skeleton, eyes, excretion glands, tooth and palatal shelves. In the cerebellum, expressed in Purkinje cells.

It is found in the golgi apparatus membrane. It localises to the cytoplasmic vesicle membrane. Its subcellular location is the cell membrane. The protein resides in the endoplasmic reticulum membrane. The protein localises to the early endosome membrane. Functionally, regulates Wnt proteins sorting and secretion in a feedback regulatory mechanism. This reciprocal interaction plays a key role in the regulation of expression, subcellular location, binding and organelle-specific association of Wnt proteins. Also plays an important role in establishment of the anterior-posterior body axis formation during development. The protein is Protein wntless homolog (Wls) of Mus musculus (Mouse).